We begin with the raw amino-acid sequence, 545 residues long: Tripartite motif-containing 55 (545 aa).

The RING-type zinc-finger motif lies at 26–82 (CPICLEMFTKPVVILPCQHNLCRKCASDIFQASNPYLPTRGGTTVASGGRFRCPSCR). The B box-type zinc finger occupies 119–161 (LDQPMCEEHEEERINIYCLNCEVPTCSLCKVFGAHKDCQVAPL). Zn(2+) contacts are provided by cysteine 124, histidine 127, cysteine 147, and histidine 153. A COS domain is found at 269-327 (MDEPEMAVFLQNAKTLLQKIVEASKAFQMEKLEQGYEIMSNFTVNLNREEKIIREIDFS). Disordered stretches follow at residues 324-352 (IDFS…VEVE), 359-378 (IASS…SQLP), and 417-532 (SQQT…EPAR). Residues 328-352 (REEEEEEDAGEIDEEGEGEDAVEVE) show a composition bias toward acidic residues. The span at 417–428 (SQQTTQSETSGP) shows a compositional bias: polar residues. Positions 474-485 (SSVQSAEVAEAA) are enriched in low complexity. Polar residues predominate over residues 486-506 (TNEQAAVSGKESSSTAATSQI).

Targeted for degradation through the proteasomal and lysosomal pathways in the presence of SUMO3. As to expression, widely expressed in various tissues, besides skeletal muscle and heart, such as brain, lung, liver, spleen and kidney.

It is found in the nucleus. The protein resides in the cytoplasm. It catalyses the reaction S-ubiquitinyl-[E2 ubiquitin-conjugating enzyme]-L-cysteine + [acceptor protein]-L-lysine = [E2 ubiquitin-conjugating enzyme]-L-cysteine + N(6)-ubiquitinyl-[acceptor protein]-L-lysine.. E3 ubiquitin ligase that plays an important role in regulating cardiac development and contractility, muscle growth, metabolism, and fiber-type differentiation. Acts as a critical factor that regulates cardiomyocyte size during development in concert with TRIM63 by regulating E2F1-mediated gene expression. Plays a role in apoptosis induction in cardiomyocytes by promoting ubiquitination of the DUSP1 phosphatase. Promotes non-canonical NF-kappa-B signaling and B-cell-mediated immune responses by mediating NFKB2 'Lys-48'-linked ubiquitination and processing. In turn, NFKB2 is further processed by valosin-containing protein/VCP, an ATPase that mediates ubiquitin-dependent protein degradation by the proteasome. May play a role in preventing macrophages from producing inflammatory factors and migrating by downregulating the level of nuclear NF-kappa-B subunit RELA. Modifies also PPARG via polyubiquitination and accelerates PPARG proteasomal degradation to inhibit its activity. The protein is Tripartite motif-containing 55 (Trim55) of Mus musculus (Mouse).